A 463-amino-acid polypeptide reads, in one-letter code: Fumarate hydratase class II (463 aa).

Substrate-binding positions include 97 to 99 (SGT), 128 to 131 (HPND), 138 to 140 (SSN), and Thr-186. His-187 serves as the catalytic Proton donor/acceptor. Ser-317 is a catalytic residue. Substrate-binding positions include Ser-318 and 323 to 325 (KVN).

It belongs to the class-II fumarase/aspartase family. Fumarase subfamily. In terms of assembly, homotetramer.

The protein localises to the cytoplasm. The enzyme catalyses (S)-malate = fumarate + H2O. Its pathway is carbohydrate metabolism; tricarboxylic acid cycle; (S)-malate from fumarate: step 1/1. In terms of biological role, involved in the TCA cycle. Catalyzes the stereospecific interconversion of fumarate to L-malate. The chain is Fumarate hydratase class II from Helicobacter pylori (strain J99 / ATCC 700824) (Campylobacter pylori J99).